The sequence spans 603 residues: Prostaglandin G/H synthase 2 (603 aa).

Residues 1-17 (MLLPCALLAALLAAGHA) form the signal peptide. Residues 18-55 (ANPCCSLPCQNRGVCMTTGFDRYECDCTRTGYYGENCT) enclose the EGF-like domain. Cystine bridges form between cysteine 21–cysteine 32, cysteine 22–cysteine 145, cysteine 26–cysteine 42, and cysteine 44–cysteine 54. Residues asparagine 53 and asparagine 90 are each glycosylated (N-linked (GlcNAc...) asparagine). Position 106 (arginine 106) interacts with substrate. N-linked (GlcNAc...) asparagine glycosylation is present at asparagine 130. Histidine 193 (proton acceptor) is an active-site residue. Residue tyrosine 341 participates in substrate binding. Tyrosine 371 serves as the catalytic For cyclooxygenase activity. Histidine 374 is a heme b binding site. Cysteine 555 and cysteine 561 are oxidised to a cystine.

Belongs to the prostaglandin G/H synthase family. Homodimer. The cofactor is heme b.

It localises to the microsome membrane. It is found in the endoplasmic reticulum membrane. The catalysed reaction is (5Z,8Z,11Z,14Z)-eicosatetraenoate + AH2 + 2 O2 = prostaglandin H2 + A + H2O. It carries out the reaction (9Z,12Z)-octadecadienoate + AH2 + O2 = (9R)-hydroxy-(10E,12Z)-octadecadienoate + A + H2O. The enzyme catalyses (9Z,12Z)-octadecadienoate + AH2 + O2 = (9S)-hydroxy-(10E,12Z)-octadecadienoate + A + H2O. It catalyses the reaction (9Z,12Z)-octadecadienoate + AH2 + O2 = (13S)-hydroxy-(9Z,11E)-octadecadienoate + A + H2O. The catalysed reaction is (9Z,12Z)-octadecadienoate + AH2 + O2 = (13R)-hydroxy-(9Z,11E)-octadecadienoate + A + H2O. It participates in lipid metabolism; prostaglandin biosynthesis. Its function is as follows. Dual cyclooxygenase and peroxidase in the biosynthesis pathway of prostanoids, a class of C20 oxylipins mainly derived from arachidonate ((5Z,8Z,11Z,14Z)-eicosatetraenoate, AA, C20:4(n-6)), with a particular role in the inflammatory response. The cyclooxygenase activity oxygenates AA to the hydroperoxy endoperoxide prostaglandin G2 (PGG2), and the peroxidase activity reduces PGG2 to the hydroxy endoperoxide prostaglandin H2 (PGH2), the precursor of all 2-series prostaglandins and thromboxanes. This complex transformation is initiated by abstraction of hydrogen at carbon 13 (with S-stereochemistry), followed by insertion of molecular O2 to form the endoperoxide bridge between carbon 9 and 11 that defines prostaglandins. The insertion of a second molecule of O2 (bis-oxygenase activity) yields a hydroperoxy group in PGG2 that is then reduced to PGH2 by two electrons. Similarly catalyzes successive cyclooxygenation and peroxidation of dihomo-gamma-linoleate (DGLA, C20:3(n-6)) and eicosapentaenoate (EPA, C20:5(n-3)) to corresponding PGH1 and PGH3, the precursors of 1- and 3-series prostaglandins. In an alternative pathway of prostanoid biosynthesis, converts 2-arachidonoyl lysophopholipids to prostanoid lysophopholipids, which are then hydrolyzed by intracellular phospholipases to release free prostanoids. Metabolizes 2-arachidonoyl glycerol yielding the glyceryl ester of PGH2, a process that can contribute to pain response. Generates lipid mediators from n-3 and n-6 polyunsaturated fatty acids (PUFAs) via a lipoxygenase-type mechanism. Oxygenates PUFAs to hydroperoxy compounds and then reduces them to corresponding alcohols. Plays a role in the generation of resolution phase interaction products (resolvins) during both sterile and infectious inflammation. Metabolizes docosahexaenoate (DHA, C22:6(n-3)) to 17R-HDHA, a precursor of the D-series resolvins (RvDs). As a component of the biosynthetic pathway of E-series resolvins (RvEs), converts eicosapentaenoate (EPA, C20:5(n-3)) primarily to 18S-HEPE that is further metabolized by ALOX5 and LTA4H to generate 18S-RvE1 and 18S-RvE2. In vascular endothelial cells, converts docosapentaenoate (DPA, C22:5(n-3)) to 13R-HDPA, a precursor for 13-series resolvins (RvTs) shown to activate macrophage phagocytosis during bacterial infection. In activated leukocytes, contributes to oxygenation of hydroxyeicosatetraenoates (HETE) to diHETES (5,15-diHETE and 5,11-diHETE). Can also use linoleate (LA, (9Z,12Z)-octadecadienoate, C18:2(n-6)) as substrate and produce hydroxyoctadecadienoates (HODEs) in a regio- and stereospecific manner, being (9R)-HODE ((9R)-hydroxy-(10E,12Z)-octadecadienoate) and (13S)-HODE ((13S)-hydroxy-(9Z,11E)-octadecadienoate) its major products. During neuroinflammation, plays a role in neuronal secretion of specialized preresolving mediators (SPMs) 15R-lipoxin A4 that regulates phagocytic microglia. This Gallus gallus (Chicken) protein is Prostaglandin G/H synthase 2 (PTGS2).